A 385-amino-acid chain; its full sequence is tRNA (guanine-N(7)-)-methyltransferase non-catalytic subunit wuho (385 aa).

3 WD repeats span residues 68-108, 155-194, and 198-236; these read KVEV…AKLL, GHLS…DIHS, and GHKE…ELLH.

The protein belongs to the WD repeat TRM82 family. In terms of assembly, forms a heterodimer with the catalytic subunit Mettl1. Interacts with mei-P26 and weakly interacts with bgcn; required for the function or formation of the mei-P26-bgcn-bam-sxl complex. Interacts with nanos; may be involved in mei-P26-dependent derepression of the BMP signaling pathway. Interacts with Myc; the interaction may be mediated by mei-P26 and may be involved in the regulation of ribosome biogenesis. In testis, it is present at high level in hub cells, a niche for germline stem cells of testis. Ubiquitously expressed in all testicular cells throughout spermatogenesis. Ubiquitously expressed in all germline and somatic cells of the ovary.

It is found in the nucleus. It localises to the cytoplasm. The protein operates within tRNA modification; N(7)-methylguanine-tRNA biosynthesis. Functionally, required for the Mettl1-dependent formation of N(7)-methylguanine at position 46 (m7G46) in tRNA. In the Mettl1-wuho methyltransferase complex, it is required to stabilize and induce conformational changes of the catalytic subunit. Required for binding of nanos mRNA and repression of translation by the mei-P26-bgcn-bam-sxl complex. May cooperate with mei-P26 and nanos to derepress the BMP signaling pathway. May cooperate with mei-P26 to suppress expression of a subset of microRNAs. May cooperate with mei-P26 to regulate bam expression levels in germline cells during gametogenesis. Required to promote mitosis to meiosis transition during gametogenesis. May regulate germline cell division in part by regulating ribosome biogenesis. The chain is tRNA (guanine-N(7)-)-methyltransferase non-catalytic subunit wuho from Drosophila grimshawi (Hawaiian fruit fly).